The following is a 69-amino-acid chain: Small ribosomal subunit protein uS14 (69 aa).

Positions 33, 36, 51, and 54 each coordinate Zn(2+).

This sequence belongs to the universal ribosomal protein uS14 family. Zinc-binding uS14 subfamily. Part of the 30S ribosomal subunit. It depends on Zn(2+) as a cofactor.

In terms of biological role, binds 16S rRNA, required for the assembly of 30S particles. The chain is Small ribosomal subunit protein uS14 from Nanoarchaeum equitans (strain Kin4-M).